The following is a 415-amino-acid chain: Protein ROH1A (415 aa).

The tract at residues 184–219 (VSGGGGGGGGGNKTTERSWSFGRRSGGSSAASKGGA) is disordered. Residues 185–195 (SGGGGGGGGGN) are compositionally biased toward gly residues. Residues 200-219 (RSWSFGRRSGGSSAASKGGA) show a composition bias toward low complexity. A helical transmembrane segment spans residues 263–283 (MFIMSTVMVFVMWVLTAAVPC).

It belongs to the ROH1 family. In terms of assembly, interacts with EXO70A1 and EXO70C1. Binds to EXO70C2. Mainly expressed in cells expanding in a polar manner such as pollen and root hairs.

Its subcellular location is the membrane. The protein localises to the cytoplasm. It localises to the cytosol. Functionally, required for seed coat mucilage deposition. This chain is Protein ROH1A, found in Arabidopsis thaliana (Mouse-ear cress).